We begin with the raw amino-acid sequence, 262 residues long: RNA polymerase sigma-B factor (262 aa).

Residues 58–71 (DLRQVGMIGLLGAI) carry the Polymerase core binding motif. Residues 224–243 (QKETGDILGISQMHVSRLQR) constitute a DNA-binding region (H-T-H motif).

Belongs to the sigma-70 factor family. SigB subfamily. In terms of assembly, interacts transiently with the RNAP core.

Sigma factors are initiation factors that promote the attachment of RNA polymerase (RNAP) to specific initiation sites and are then released. Sigma B is not essential for sporulation; rather it is required for maximal expression of ctc and csbA which are transcribed in the early stationary phase under conditions inimical to sporulation. May play a role in the ability of the bacterium to adapt to various stresses but is not essential for its survival under these conditions. Positively regulates expression of its own operon. The second most abundant sigma factor, it associates with RNAP core under all growth phases. This is RNA polymerase sigma-B factor (sigB) from Bacillus subtilis (strain 168).